The chain runs to 422 residues: Protein FAM53B (422 aa).

Phosphoserine is present on residues Ser119, Ser168, Ser170, Ser180, Ser213, and Ser269. Disordered regions lie at residues 193–225 and 243–269; these read GQPC…GRLD and CPPS…RSRS. The span at 244 to 269 shows a compositional bias: low complexity; that stretch reads PPSANSTPASTPELARRSSGLARSRS. Residues 282–285 carry the Nuclear localization signal motif; that stretch reads KRRR. Residues Ser335 and Ser344 each carry the phosphoserine modification.

Belongs to the FAM53 family. As to quaternary structure, interacts with CTNNB1.

It is found in the nucleus. In terms of biological role, acts as a regulator of Wnt signaling pathway by regulating beta-catenin (CTNNB1) nuclear localization. The polypeptide is Protein FAM53B (Mus musculus (Mouse)).